Consider the following 339-residue polypeptide: Methionine import ATP-binding protein MetN 2 (339 aa).

The ABC transporter domain occupies 2–241 (ISFNNVSKVY…PKTKTTQNFV (240 aa)). 38 to 45 (GFSGAGKS) is an ATP binding site.

The protein belongs to the ABC transporter superfamily. Methionine importer (TC 3.A.1.24) family. The complex is composed of two ATP-binding proteins (MetN), two transmembrane proteins (MetI) and a solute-binding protein (MetQ).

Its subcellular location is the cell membrane. It catalyses the reaction L-methionine(out) + ATP + H2O = L-methionine(in) + ADP + phosphate + H(+). It carries out the reaction D-methionine(out) + ATP + H2O = D-methionine(in) + ADP + phosphate + H(+). Functionally, part of the ABC transporter complex MetNIQ involved in methionine import. Responsible for energy coupling to the transport system. The polypeptide is Methionine import ATP-binding protein MetN 2 (Bacillus cereus (strain ZK / E33L)).